The primary structure comprises 480 residues: DnaJ homolog subfamily A member 3, mitochondrial (480 aa).

The residue at position 58 (Arg58) is an Omega-N-methylarginine; by CARM1. The J domain occupies 93–158 (DYYQILGVPR…VKRKQYDAYG (66 aa)). Lys134 is modified (N6-acetyllysine). A CR-type zinc finger spans residues 223-301 (GVNKEFTVNI…CRGAGQAKQK (79 aa)). Cys236 contacts Zn(2+). CXXCXGXG motif repeat units lie at residues 236 to 243 (CERCDGKG), 253 to 260 (CHYCGGSG), 275 to 282 (CRRCGGRG), and 289 to 296 (CVVCRGAG). Position 238 is an omega-N-methylarginine; by CARM1 (Arg238). The Zn(2+) site is built by Cys239, Cys253, Cys256, Cys275, Cys278, Cys289, and Cys292. Omega-N-methylarginine; by CARM1 is present on Arg293. The residue at position 398 (Ser398) is a Phosphoserine. The segment at 437–468 (TVNGVTHTSTGGRTMDSSAGSKDRREAGEDNE) is disordered. Polar residues predominate over residues 439 to 456 (NGVTHTSTGGRTMDSSAG).

Interacts with JAK2, HSPA9B and IFN-gammaR2 chain. Interacts with Ras GTPase-activating protein 1 (RASA1). Isoform 2 interacts with MUSK (via the cytoplasmic domain). In terms of processing, tyrosine phosphorylated.

It is found in the mitochondrion matrix. The protein resides in the cytoplasm. Its subcellular location is the cytosol. The protein localises to the postsynaptic cell membrane. Modulates apoptotic signal transduction or effector structures within the mitochondrial matrix. Affect cytochrome C release from the mitochondria and caspase 3 activation, but not caspase 8 activation. Isoform 1 increases apoptosis triggered by both TNF and the DNA-damaging agent mytomycin C; in sharp contrast, isoform 2 suppresses apoptosis. Can modulate IFN-gamma-mediated transcriptional activity. Isoform 2 may play a role in neuromuscular junction development as an effector of the MUSK signaling pathway. This chain is DnaJ homolog subfamily A member 3, mitochondrial (Dnaja3), found in Mus musculus (Mouse).